The primary structure comprises 229 residues: Uracil-DNA glycosylase (229 aa).

Asp67 (proton acceptor) is an active-site residue.

The protein belongs to the uracil-DNA glycosylase (UDG) superfamily. UNG family.

The protein resides in the cytoplasm. The catalysed reaction is Hydrolyzes single-stranded DNA or mismatched double-stranded DNA and polynucleotides, releasing free uracil.. Functionally, excises uracil residues from the DNA which can arise as a result of misincorporation of dUMP residues by DNA polymerase or due to deamination of cytosine. This chain is Uracil-DNA glycosylase, found in Coxiella burnetii (strain CbuK_Q154) (Coxiella burnetii (strain Q154)).